We begin with the raw amino-acid sequence, 782 residues long: E3 ubiquitin-protein ligase SopA (782 aa).

The disordered stretch occupies residues 136 to 171 (GVSVSANNRPTVSEGRTPPVSPSLSLQATSSPSSPA). The span at 157 to 171 (PSLSLQATSSPSSPA) shows a compositional bias: low complexity. The active-site Glycyl thioester intermediate is Cys-753.

The protein belongs to the SopA E3 ligase family. Ubiquitinated in the presence of host E1 ubiquitin-activating enzyme, E2 ubiquitin-conjugating enzyme and ubiquitin.

It localises to the secreted. The protein resides in the host cell. It carries out the reaction S-ubiquitinyl-[E2 ubiquitin-conjugating enzyme]-L-cysteine + [acceptor protein]-L-lysine = [E2 ubiquitin-conjugating enzyme]-L-cysteine + N(6)-ubiquitinyl-[acceptor protein]-L-lysine.. Its function is as follows. Effector proteins function to alter host cell physiology and promote bacterial survival in host tissues. This protein is an E3 ubiquitin ligase that interferes with host's ubiquitination pathway. For instance, prevents host innate immune response by ubiquitinating and thus sending to degradation host E3 ubiquitin ligases TRIM56 and TRIM65. This chain is E3 ubiquitin-protein ligase SopA (sopA), found in Salmonella typhimurium (strain D23580).